The primary structure comprises 914 residues: MEFVMKTRMFEEEGWIRKTCKVCGKPFWTLDPDRETCGDPPCDEYQFIGKPGIPKKYTLDEMREKFLSFFEKHEVYPHGRVKRYPVLPRWRDDVLLVGASIMDFQPWVISGEADPPANPLTISQPSIRFTDIDNVGITGRHFTIFEMMAHHAFNYPGKHIYWIDETVELAFEFFTKELKMKPEDITFKENPWAGGGNAGPAFEVLYKGLEVATLVFMQYKKAPANADPSQVVIIKGEKYVPMETKVVDTGYGLERLVWMSQGTPTAYDAVLGYVIEPLKRMAGVEKIDERILMENSRLAGMFDIEDMGDLRYLREQVAKRVGISVEELERLIRPYELIYAIADHTKALTFMLADGVVPSNVKAGYLARLLIRKSIRHLRELGLEVPLAEIVAMHIKELSPTFPEFKEMEDIILEMIELEEKKYAETLRRGSDLVKREIAKLKKKGANEIPLEKLITFYESHGLTPEIVKEIAEKEGVKVHIPDNFYSLVAKEAEKQVEEKEEEVVDFELVKDLPDTRTLYYEDPFMKEFDAKVLKVIEDWVVLDQTAFYPEGGGQPYDTGILVVDGEEVKVTNVQKVGKVILHKVERPELFKEGTIVHGRIDWERRIQHMRHHTGTHVLMGALVRVLGKHVWQAGSQLSTDWARLDITHYKRISDEEIKEIERLANRVVMENRRVRWEWLPRTEADEKYGFRLYQGGVVPGRIIRILNIEDWDVQACGGTHLPSTGLIGPIKILRTERIQDGVERIIFACGEAAVREWQKEREIIKRTSQILRVPPEKLPETAERFFNEWKEARKEVEKLRKELAKLLVYELESKVEKVGEIEFIGEIVEGSMDDLREAANKLRKENRVVVLVNKEGHFVVAVGDKLPYTAGEFAKLITSVAGGGGGGRKELAQGKIRDIEKAKEAIEKVKGSL.

Zn(2+)-binding residues include His613, His617, Cys717, and His721.

Belongs to the class-II aminoacyl-tRNA synthetase family. Requires Zn(2+) as cofactor.

Its subcellular location is the cytoplasm. The catalysed reaction is tRNA(Ala) + L-alanine + ATP = L-alanyl-tRNA(Ala) + AMP + diphosphate. Catalyzes the attachment of alanine to tRNA(Ala) in a two-step reaction: alanine is first activated by ATP to form Ala-AMP and then transferred to the acceptor end of tRNA(Ala). Also edits incorrectly charged Ser-tRNA(Ala) and Gly-tRNA(Ala) via its editing domain. The sequence is that of Alanine--tRNA ligase from Pyrococcus furiosus (strain ATCC 43587 / DSM 3638 / JCM 8422 / Vc1).